Reading from the N-terminus, the 68-residue chain is Large ribosomal subunit protein bL33c (68 aa).

This sequence belongs to the bacterial ribosomal protein bL33 family.

The protein resides in the plastid. It localises to the chloroplast. This chain is Large ribosomal subunit protein bL33c, found in Nymphaea alba (White water-lily).